We begin with the raw amino-acid sequence, 171 residues long: Protein BTG1 (171 aa).

S159 bears the Phosphoserine mark.

It belongs to the BTG family. Interacts with CNOT7 and CNOT8.

In terms of biological role, anti-proliferative protein. This Rattus norvegicus (Rat) protein is Protein BTG1 (Btg1).